The following is a 1319-amino-acid chain: Chitin-binding domain protein cbd-1 (1319 aa).

An N-terminal signal peptide occupies residues Met-1–Ser-19. Chitin-binding type-2 domains lie at Ala-28–Val-83, Glu-96–Cys-141, and Asp-190–Asp-236. 3 disulfides stabilise this stretch: Cys-61-Cys-72, Cys-128-Cys-141, and Cys-222-Cys-235. Residues Tyr-250–Ala-271 form a disordered region. The region spanning Pro-304–Pro-357 is the Chitin-binding type-2 4 domain. Asn-327 is a glycosylation site (N-linked (GlcNAc...) asparagine). Residues Cys-335 and Cys-348 are joined by a disulfide bond. Residues Lys-504–Glu-524 form a disordered region. The span at Gly-513–Glu-524 shows a compositional bias: basic and acidic residues. The Chitin-binding type-2 5 domain occupies Asn-566 to Cys-614. Cys-601 and Cys-614 are joined by a disulfide. Residues Val-649–Ser-682 are disordered. Chitin-binding type-2 domains are found at residues Gly-689–Ser-745, Gly-782–Thr-838, and Val-883–Glu-942. Cys-721 and Cys-734 are oxidised to a cystine. Residues Glu-742–Asn-764 form a disordered region. Residues Ser-745–Asn-764 are compositionally biased toward polar residues. Cystine bridges form between Cys-814-Cys-827 and Cys-916-Cys-929. A compositionally biased stretch (polar residues) spans Thr-984–Gly-995. The interval Thr-984–Lys-1031 is disordered. An N-linked (GlcNAc...) asparagine glycan is attached at Asn-1016. Positions Asp-1017–Glu-1027 are enriched in acidic residues. 4 Chitin-binding type-2 domains span residues Asp-1029 to Lys-1081, Glu-1105 to Val-1163, Ser-1179 to Asn-1237, and Asn-1242 to Gly-1298. Intrachain disulfides connect Cys-1060/Cys-1073, Cys-1139/Cys-1152, Cys-1213/Cys-1226, and Cys-1274/Cys-1287. Residues Ser-1297–Tyr-1312 are compositionally biased toward low complexity. Residues Ser-1297 to Tyr-1319 form a disordered region. An N-linked (GlcNAc...) asparagine glycan is attached at Asn-1304.

The protein resides in the secreted. The protein localises to the extracellular space. It localises to the extracellular matrix. Functionally, in unfertilized oocytes, maintains egg-1 and egg-2 at the plasma membrane together with chitin synthase chs-1 and kinase mbk-2. Essential for the formation of a continuous and cohesive chitin layer following fertilization. The chain is Chitin-binding domain protein cbd-1 from Caenorhabditis elegans.